The sequence spans 400 residues: Tryptophan synthase beta chain (400 aa).

The residue at position 90 (K90) is an N6-(pyridoxal phosphate)lysine.

It belongs to the TrpB family. As to quaternary structure, tetramer of two alpha and two beta chains. The cofactor is pyridoxal 5'-phosphate.

The enzyme catalyses (1S,2R)-1-C-(indol-3-yl)glycerol 3-phosphate + L-serine = D-glyceraldehyde 3-phosphate + L-tryptophan + H2O. The protein operates within amino-acid biosynthesis; L-tryptophan biosynthesis; L-tryptophan from chorismate: step 5/5. Its function is as follows. The beta subunit is responsible for the synthesis of L-tryptophan from indole and L-serine. The chain is Tryptophan synthase beta chain from Alkaliphilus metalliredigens (strain QYMF).